The chain runs to 40 residues: Natriuretic peptide HsNP-b (40 aa).

Positions serine 1–isoleucine 8 are excised as a propeptide. The tract at residues serine 1–serine 40 is disordered. A disulfide bridge connects residues cysteine 12 and cysteine 28. The segment covering proline 31–serine 40 has biased composition (basic residues).

This sequence belongs to the natriuretic peptide family. In terms of tissue distribution, expressed by the venom gland.

It localises to the secreted. Its function is as follows. Snake venom natriuretic peptide that targets both NPR1 and NPR2. Exhibits hypotensive and vasodepressor activities. This chain is Natriuretic peptide HsNP-b, found in Hoplocephalus stephensii (Stephens's banded snake).